Here is a 191-residue protein sequence, read N- to C-terminus: Protein Ves (191 aa).

This sequence belongs to the Ves family.

In Escherichia coli (strain SE11), this protein is Protein Ves.